A 282-amino-acid polypeptide reads, in one-letter code: F-actin-capping protein subunit beta (282 aa).

The tract at residues 73-103 (SPWSNQFDPPLDEAGSGGVGAGGNEGAGEGA) is disordered. The span at 87 to 101 (GSGGVGAGGNEGAGE) shows a compositional bias: gly residues.

The protein belongs to the F-actin-capping protein beta subunit family. In terms of assembly, component of the F-actin capping complex, composed of a heterodimer of an alpha and a beta subunit.

It is found in the cytoplasm. The protein resides in the cytoskeleton. Its subcellular location is the actin patch. F-actin-capping proteins bind in a Ca(2+)-independent manner to the fast growing ends of actin filaments (barbed end) thereby blocking the exchange of subunits at these ends. Unlike other capping proteins (such as gelsolin and severin), these proteins do not sever actin filaments. The polypeptide is F-actin-capping protein subunit beta (CAP2) (Gibberella zeae (strain ATCC MYA-4620 / CBS 123657 / FGSC 9075 / NRRL 31084 / PH-1) (Wheat head blight fungus)).